Consider the following 884-residue polypeptide: Alanine--tRNA ligase (884 aa).

Zn(2+)-binding residues include H570, H574, C676, and H680.

The protein belongs to the class-II aminoacyl-tRNA synthetase family. It depends on Zn(2+) as a cofactor.

It is found in the cytoplasm. The catalysed reaction is tRNA(Ala) + L-alanine + ATP = L-alanyl-tRNA(Ala) + AMP + diphosphate. Catalyzes the attachment of alanine to tRNA(Ala) in a two-step reaction: alanine is first activated by ATP to form Ala-AMP and then transferred to the acceptor end of tRNA(Ala). Also edits incorrectly charged Ser-tRNA(Ala) and Gly-tRNA(Ala) via its editing domain. In Lawsonia intracellularis (strain PHE/MN1-00), this protein is Alanine--tRNA ligase.